Consider the following 318-residue polypeptide: uncharacterized protein (318 aa).

2 helical membrane-spanning segments follow: residues 230 to 250 and 264 to 284; these read VWTY…SFLI and ASLM…LGVI.

Belongs to the glycosyltransferase 2 family. GtrB subfamily.

It is found in the cell membrane. This is an uncharacterized protein from Synechocystis sp. (strain ATCC 27184 / PCC 6803 / Kazusa).